The sequence spans 473 residues: Glutamine synthetase (473 aa).

In terms of domain architecture, GS beta-grasp spans 15–100; the sequence is ENIKIIDLKF…ICSIKEPRTG (86 aa). The GS catalytic domain maps to 107–473; the sequence is PRTIAAKAVE…PYEFSLYYDC (367 aa). Glutamate 132 is a Mn(2+) binding site. Glutamate 134 is a binding site for Mg(2+). Glutamate 210 is a binding site for ATP. Positions 215 and 223 each coordinate Mg(2+). L-glutamate-binding positions include 267 to 268 and glycine 268; that span reads NG. Mg(2+) is bound at residue histidine 272. Residues 274-276 and serine 276 each bind ATP; that span reads HQS. L-glutamate is bound by residues arginine 324, glutamate 330, and arginine 342. Arginine 342, arginine 347, and lysine 356 together coordinate ATP. Residue glutamate 361 participates in Mn(2+) binding. Residue arginine 363 coordinates L-glutamate. An O-AMP-tyrosine modification is found at tyrosine 401.

It belongs to the glutamine synthetase family. In terms of assembly, oligomer of 12 subunits arranged in the form of two hexagons. The cofactor is Mg(2+).

It localises to the cytoplasm. It carries out the reaction L-glutamate + NH4(+) + ATP = L-glutamine + ADP + phosphate + H(+). Its activity is regulated as follows. Inhibited by ADP (90%), AMP (80%), alanine (52%) and aspartate (41%). The activity of this enzyme could be controlled by adenylation under conditions of abundant glutamine. Involved in nitrogen metabolism via ammonium assimilation. Catalyzes the ATP-dependent biosynthesis of glutamine from glutamate and ammonia. The polypeptide is Glutamine synthetase (Synechocystis sp. (strain ATCC 27184 / PCC 6803 / Kazusa)).